The primary structure comprises 62 residues: Protein DsrB (62 aa).

This sequence belongs to the DsrB family.

This is Protein DsrB from Escherichia fergusonii (strain ATCC 35469 / DSM 13698 / CCUG 18766 / IAM 14443 / JCM 21226 / LMG 7866 / NBRC 102419 / NCTC 12128 / CDC 0568-73).